The sequence spans 1368 residues: DNA-directed RNA polymerase subunit beta (1368 aa).

It belongs to the RNA polymerase beta chain family. The RNAP catalytic core consists of 2 alpha, 1 beta, 1 beta' and 1 omega subunit. When a sigma factor is associated with the core the holoenzyme is formed, which can initiate transcription.

The enzyme catalyses RNA(n) + a ribonucleoside 5'-triphosphate = RNA(n+1) + diphosphate. DNA-dependent RNA polymerase catalyzes the transcription of DNA into RNA using the four ribonucleoside triphosphates as substrates. This Cupriavidus taiwanensis (strain DSM 17343 / BCRC 17206 / CCUG 44338 / CIP 107171 / LMG 19424 / R1) (Ralstonia taiwanensis (strain LMG 19424)) protein is DNA-directed RNA polymerase subunit beta.